A 578-amino-acid chain; its full sequence is Paraneoplastic antigen Ma6F (578 aa).

Disordered regions lie at residues 106-221 and 441-578; these read AQPQ…AGAA and AAPV…PPGK. Residues 112–129 show a composition bias toward low complexity; it reads AVARGAGEAGAAGEAGSV. The span at 147–159 shows a compositional bias: gly residues; it reads GGIGEAGGVGEAG. The span at 160 to 173 shows a compositional bias: low complexity; the sequence is AAGEAGAAGEAGAA. The segment covering 174–211 has biased composition (gly residues); that stretch reads GEAGGAGEAGGAGEAGGAGEEGGTGEEGGAGEAGGAGE. The segment covering 449–461 has biased composition (low complexity); that stretch reads PAAAQASPAQGDA. Acidic residues-rich tracts occupy residues 462–473 and 556–566; these read SEADPGAEDADE and EESENEDEDGA.

This chain is Paraneoplastic antigen Ma6F, found in Homo sapiens (Human).